A 547-amino-acid polypeptide reads, in one-letter code: (R)-citramalate synthase (547 aa).

The Pyruvate carboxyltransferase domain occupies 8-278 (LWLYDTTLRD…YDCIEPEKLA (271 aa)).

This sequence belongs to the alpha-IPM synthase/homocitrate synthase family.

It catalyses the reaction pyruvate + acetyl-CoA + H2O = (3R)-citramalate + CoA + H(+). It functions in the pathway amino-acid biosynthesis; L-isoleucine biosynthesis; 2-oxobutanoate from pyruvate: step 1/3. Catalyzes the condensation of pyruvate and acetyl-coenzyme A to form (R)-citramalate. The polypeptide is (R)-citramalate synthase (Synechocystis sp. (strain ATCC 27184 / PCC 6803 / Kazusa)).